The chain runs to 333 residues: MRTKRVFHAVDSHTEGMPTRVITGGVGVIPGSTMAERREHFLAEMDHVRTLLMYEPRGHSAMSGAILQPPTRPDADYGVLYIEVSGCLPMCGHGTIGVATVLVETGMVEVVEPVTTIRLDTPAGLVVAEVRVEDGAATAVTITNVPSFSAGLDRTVKVPGIGEVTYDLAYGGNFYAILPIESVGLPFDRAHKQQILDAGLAIMDAINEQDEPVHPLDAGIRGCHHVQFTAPGSDARHSRHAMAIHPGWFDRSPCGTGTSARMAQLHARGELPLDTDFVNESFIGTRFVGRLVEETEVTDLPAVVPTITGRAWVTGTAQYFLDPRDPFPEGFLL.

C91 serves as the catalytic Proton acceptor. Substrate-binding positions include 92–93, H225, and D250; that span reads GH. Catalysis depends on C254, which acts as the Proton donor. 255-256 contributes to the substrate binding site; sequence GT.

The protein belongs to the proline racemase family.

It carries out the reaction trans-4-hydroxy-L-proline = cis-4-hydroxy-D-proline. In terms of biological role, catalyzes the epimerization of trans-4-hydroxy-L-proline (t4LHyp) to cis-4-hydroxy-D-proline (c4DHyp). Is likely involved in a degradation pathway that converts t4LHyp to alpha-ketoglutarate. Displays no proline racemase activity. This is 4-hydroxyproline 2-epimerase from Streptosporangium roseum (strain ATCC 12428 / DSM 43021 / JCM 3005 / KCTC 9067 / NCIMB 10171 / NRRL 2505 / NI 9100).